The sequence spans 78 residues: Probable Fe(2+)-trafficking protein (78 aa).

Belongs to the Fe(2+)-trafficking protein family. Monomer.

Its function is as follows. Could be a mediator in iron transactions between iron acquisition and iron-requiring processes, such as synthesis and/or repair of Fe-S clusters in biosynthetic enzymes. This chain is Probable Fe(2+)-trafficking protein, found in Wigglesworthia glossinidia brevipalpis.